The chain runs to 533 residues: Tyrosine protein-kinase src-1 (533 aa).

Gly2 carries N-myristoyl glycine lipidation. Positions 71-132 constitute an SH3 domain; it reads QERETLVALY…PRNFVAKQQT (62 aa). In terms of domain architecture, SH2 spans 138–237; sequence WYAGKIPRNR…GLCCQLTFPA (100 aa). Positions 262 to 521 constitute a Protein kinase domain; that stretch reads LHLKRKLGDG…TLYHFFDDYF (260 aa). Residues 268–276 and Lys290 contribute to the ATP site; that span reads LGDGNFGEV. Asp381 (proton acceptor) is an active-site residue. Phosphotyrosine; by autocatalysis is present on Tyr416. The residue at position 528 (Tyr528) is a Phosphotyrosine.

Belongs to the protein kinase superfamily. Tyr protein kinase family. SRC subfamily. As to quaternary structure, interacts (via SH2 domain and SH3 domain) with unc-5 (via cytoplasmic domain); the interaction requires kinase activity. Interacts (when activated and phosphorylated at 'Tyr-416') with ina-1 (via cytoplasmic domain) and with ced-2 (via SH2 domain). Mg(2+) is required as a cofactor. It depends on Mn(2+) as a cofactor. Post-translationally, may be phosphorylated on Tyr-528 by csk-1. Expressed in some neurons (ASE, ADF, AVA, AUA, RMDV and BAG) in the head region, anchor cell, vulva, cells around anus, body wall muscle, pharyngeal muscles in procorpus and metacorpus. Expressed in gonadal distal tip cells.

It localises to the cell membrane. It is found in the cell projection. The protein resides in the phagocytic cup. The catalysed reaction is L-tyrosyl-[protein] + ATP = O-phospho-L-tyrosyl-[protein] + ADP + H(+). May be activated by autophosphorylation. May be inhibited by csk-1-mediated phosphorylation. Non-receptor tyrosine-protein kinase which plays a role in endoderm development by controlling spindle orientation in EMS blastomere, probably downstream of receptor mes-1. Also involved in embryonic body morphogenesis, especially in the formation of the pharynx and the intestine. May be dispensable for pharyngeal muscle organization in the adult. Probably phosphorylates netrin receptor unc-5, to regulate distal tip cell (DTC) migration during gonad development and in axon repulsion. Plays a role in the migration of the QR neuroblast, a precursor of the AVM neuron, and in the migration of the axon cone of AVM, ALM, CAN and PVM neurons. May act downstream of migratory protein mig-13 to control AVM neuron migration. Probably downstream of integrin ina-1/pat-3, plays a role in the clearance of apoptotic cells during mid-embryogenesis. Phosphorylates ced-1 at 'Tyr-1019' which promotes ced-1 proteasomal degradation, maintaining appropriate ced-1 levels for apoptotic cell clearance. In Caenorhabditis elegans, this protein is Tyrosine protein-kinase src-1.